A 378-amino-acid chain; its full sequence is Packaging protein 3 (378 aa).

Disordered stretches follow at residues 1–73 (MHPV…EGPV) and 355–378 (SRPP…DDFI). Positions 1 to 178 (MHPVLQSVRN…AFGEELRNTC (178 aa)) are interaction with packaging protein 1. 2 stretches are compositionally biased toward low complexity: residues 16 to 35 (GGPH…SVRR) and 49 to 58 (PGAGATPTAG). The residue at position 362 (Ser362) is a Phosphoserine; by host. Over residues 363 to 378 (FADEGPSESDDEDDFI) the composition is skewed to acidic residues.

It belongs to the adenoviridae packaging protein 3 family. Part of the genome packaging complex composed of packaging proteins 1, 2 and 3; this complex specifically binds to the packaging sequence on the left end of viral genomic DNA and performs packaging of the viral genome. Interacts with hexon-linking protein IIIa; this interaction is required to promote correct genome packaging. In terms of processing, cleaved at different sites by the viral protease during virion maturation.

It localises to the host nucleus. In terms of biological role, involved in viral genome packaging through its interaction with packaging proteins 1 and 2. After proteolytic cleavage by adenovirus protease, L1 52/55k protein is removed from the capsid during viral maturation. In Galliformes (FAdV-1), this protein is Packaging protein 3.